The following is a 301-amino-acid chain: MNDKKHLGHQAKKRFGQNFLHNDAVISDIVDAINPEPGENLIEIGPGLGALTEPVIERAGKLSVVELDRDLAHRLRHHPFLAKDLTIYETDALKFDFSELATEEQPLRIFGNLPYNISTPLIFHLLTFKDKVKDMHFMLQKEVVERMAAGPHCKAYGRLSIMTQYQCQVFPVMEIGPEAFKPAPKVDSAIVRLIPHAHIENPVKDINALNTVCLAAFNQRRKTIRNTFKKLITEAQLAELNIDANLRPENLSLDEYKKLADFIVDNPPEAAPVKEKRRMAKNKMTEPANNNLNENSAPEVD.

S-adenosyl-L-methionine-binding residues include Asn18, Leu20, Gly45, Glu66, Asp91, and Asn112. A disordered region spans residues 267–301 (PPEAAPVKEKRRMAKNKMTEPANNNLNENSAPEVD). The span at 287–301 (PANNNLNENSAPEVD) shows a compositional bias: polar residues.

This sequence belongs to the class I-like SAM-binding methyltransferase superfamily. rRNA adenine N(6)-methyltransferase family. RsmA subfamily.

It is found in the cytoplasm. The catalysed reaction is adenosine(1518)/adenosine(1519) in 16S rRNA + 4 S-adenosyl-L-methionine = N(6)-dimethyladenosine(1518)/N(6)-dimethyladenosine(1519) in 16S rRNA + 4 S-adenosyl-L-homocysteine + 4 H(+). In terms of biological role, specifically dimethylates two adjacent adenosines (A1518 and A1519) in the loop of a conserved hairpin near the 3'-end of 16S rRNA in the 30S particle. May play a critical role in biogenesis of 30S subunits. This is Ribosomal RNA small subunit methyltransferase A from Colwellia psychrerythraea (strain 34H / ATCC BAA-681) (Vibrio psychroerythus).